The following is a 299-amino-acid chain: Oxygen-dependent coproporphyrinogen-III oxidase (299 aa).

Serine 92 provides a ligand contact to substrate. Positions 96 and 106 each coordinate a divalent metal cation. The Proton donor role is filled by histidine 106. 108-110 (NVR) lines the substrate pocket. A divalent metal cation is bound by residues histidine 145 and histidine 175. An important for dimerization region spans residues 240–275 (YVEFNLVWDRGTLFGLQTGGRTESILMSMPPLVRWE). 258–260 (GGR) contributes to the substrate binding site.

It belongs to the aerobic coproporphyrinogen-III oxidase family. As to quaternary structure, homodimer. The cofactor is a divalent metal cation.

It localises to the cytoplasm. It carries out the reaction coproporphyrinogen III + O2 + 2 H(+) = protoporphyrinogen IX + 2 CO2 + 2 H2O. The protein operates within porphyrin-containing compound metabolism; protoporphyrin-IX biosynthesis; protoporphyrinogen-IX from coproporphyrinogen-III (O2 route): step 1/1. Involved in the heme biosynthesis. Catalyzes the aerobic oxidative decarboxylation of propionate groups of rings A and B of coproporphyrinogen-III to yield the vinyl groups in protoporphyrinogen-IX. This chain is Oxygen-dependent coproporphyrinogen-III oxidase, found in Citrobacter koseri (strain ATCC BAA-895 / CDC 4225-83 / SGSC4696).